Reading from the N-terminus, the 250-residue chain is UPF0736 protein RBAM_011410 (250 aa).

Belongs to the UPF0736 family.

This is UPF0736 protein RBAM_011410 from Bacillus velezensis (strain DSM 23117 / BGSC 10A6 / LMG 26770 / FZB42) (Bacillus amyloliquefaciens subsp. plantarum).